Here is a 444-residue protein sequence, read N- to C-terminus: MKKEKKYFGTDGIRDQVGKGLICPDKILKLGWATGKVIKDHGESVVMIGKDTRISGYMFESALEAGFIAAGVDVMLLGPMPTPAVAYLTQTFHADAGIVISASHNPHHDNGIKFFSAKGQKISDAIEHEIEAAYEQDLSIVSSSDLGRAKRIDDAAGRYIEFCKSTYEGAKKLDGFKIVLDCAQGATYHIAPMVFKELGAEVVAIGVEPDGININQNCGATDLAQLQARVVAEKADFGIAFDGDGDRVMMVDAQGDVVDGDEILYILATGTNLPIKGVAGTLMSNLGLENALKEKGIELVRTQVGDRYVMEALREKGWVLGAESSGHVLCLNKTTTGDGIVAALQVVSIMVNSGKTLTELRQGMTKYPQILQNVRVESKVGLNTNAALKKAVQDSEERMGGKGRVLIRASGTEPLIRVMVEGDSRSMIESEVKSLVELVKTEFC.

Serine 103 acts as the Phosphoserine intermediate in catalysis. Residues serine 103, aspartate 242, aspartate 244, and aspartate 246 each coordinate Mg(2+). The residue at position 103 (serine 103) is a Phosphoserine.

Belongs to the phosphohexose mutase family. Mg(2+) serves as cofactor. Post-translationally, activated by phosphorylation.

It carries out the reaction alpha-D-glucosamine 1-phosphate = D-glucosamine 6-phosphate. In terms of biological role, catalyzes the conversion of glucosamine-6-phosphate to glucosamine-1-phosphate. The polypeptide is Phosphoglucosamine mutase (Hydrogenovibrio crunogenus (strain DSM 25203 / XCL-2) (Thiomicrospira crunogena)).